The chain runs to 317 residues: MAPFLVLFLAGVVSASRGDREPVYRDCVTVCDQNNCTGFRLRDFRAQQPLYMRLTGWTCLDDCRYKCMWYTVSLYLKEGHEVPQFHGKWPFSRFLFFQEPASALASFLNGVASLLMLFRYRSSVPSSCQMYRTCLAFSMVSVNAWFWSTIFHTRDTALTEKMDYFCASSVILHSIYLCCMRTFGLQYPSIANAFGAFLVLLFACHISYLTLGRFDYSYNMAANTSFGIVNLMWWLAWCMWRRFHQPYLWKCVLVVVLLQSLALLELLDFPPVMWILDAHALWHFSTIPLHFLFYSFLRDDSLYLLKVNHDDDIPKLD.

An N-terminal signal peptide occupies residues 1–18 (MAPFLVLFLAGVVSASRG). The Lumenal segment spans residues 19-93 (DREPVYRDCV…QFHGKWPFSR (75 aa)). A glycan (N-linked (GlcNAc...) asparagine) is linked at Asn35. A helical membrane pass occupies residues 94–114 (FLFFQEPASALASFLNGVASL). At 115 to 132 (LMLFRYRSSVPSSCQMYR) the chain is on the cytoplasmic side. Residues 133–153 (TCLAFSMVSVNAWFWSTIFHT) form a helical membrane-spanning segment. At 154-163 (RDTALTEKMD) the chain is on the lumenal side. A helical membrane pass occupies residues 164-180 (YFCASSVILHSIYLCCM). The Cytoplasmic portion of the chain corresponds to 181-189 (RTFGLQYPS). A helical membrane pass occupies residues 190–210 (IANAFGAFLVLLFACHISYLT). Residues 211 to 219 (LGRFDYSYN) lie on the Lumenal side of the membrane. The chain crosses the membrane as a helical span at residues 220 to 240 (MAANTSFGIVNLMWWLAWCMW). The Cytoplasmic segment spans residues 241–251 (RRFHQPYLWKC). A helical transmembrane segment spans residues 252-272 (VLVVVLLQSLALLELLDFPPV). Met273 is a topological domain (lumenal). The chain crosses the membrane as a helical span at residues 274–293 (WILDAHALWHFSTIPLHFLF). At 294-317 (YSFLRDDSLYLLKVNHDDDIPKLD) the chain is on the cytoplasmic side.

It belongs to the PGAP3 family.

It localises to the golgi apparatus membrane. In terms of biological role, involved in the fatty acid remodeling steps of GPI-anchor maturation where the unsaturated acyl chain at sn-2 of inositol phosphate is replaced by a saturated stearoyl chain. May catalyze the first step of the fatty acid remodeling, by removing the unsaturated acyl chain at sn-2 of inositol phosphate, generating a lyso-GPI intermediate. The fatty acid remodeling steps is critical for the integration of GPI-APs into lipid rafts. The sequence is that of GPI-specific phospholipase A2-like PGAP3 from Xenopus laevis (African clawed frog).